We begin with the raw amino-acid sequence, 754 residues long: Protein tyrosine phosphatase domain-containing protein 1 (754 aa).

Residues 82-253 (YSSWVTDNIL…LTPLRNIFSC (172 aa)) enclose the Tyrosine-protein phosphatase domain. The active-site Phosphocysteine intermediate is the cysteine 190. A phosphoserine mark is found at serine 392 and serine 394. Residues 487–498 (SGAFSADVSGSH) are compositionally biased toward polar residues. Residues 487–554 (SGAFSADVSG…PRSPLDCGSS (68 aa)) are disordered. The residue at position 547 (serine 547) is a Phosphoserine.

This sequence belongs to the protein-tyrosine phosphatase family. Non-receptor class PTPDC1 subfamily.

In terms of biological role, may play roles in cilia formation and/or maintenance. This chain is Protein tyrosine phosphatase domain-containing protein 1 (PTPDC1), found in Homo sapiens (Human).